We begin with the raw amino-acid sequence, 671 residues long: Transcriptional regulator Kaiso (671 aa).

The interval 1–103 is interaction with NCOR1; it reads MESRKLISAT…RADLLDELIK (103 aa). The segment at 1–136 is self-association; the sequence is MESRKLISAT…SGTEQDGTAE (136 aa). The BTB domain maps to 32 to 94; that stretch reads CDVTVIVEDR…IYSSKVVRVR (63 aa). The segment covering 127–144 has biased composition (polar residues); that stretch reads SGTEQDGTAETLPSSSSD. A disordered region spans residues 127–161; the sequence is SGTEQDGTAETLPSSSSDKSLDMEKSKDEAQDNGA. Residues 145–156 are compositionally biased toward basic and acidic residues; it reads KSLDMEKSKDEA. Residues lysine 151 and lysine 153 each participate in a glycyl lysine isopeptide (Lys-Gly) (interchain with G-Cter in SUMO2) cross-link. The residue at position 251 (threonine 251) is a Phosphothreonine. The interaction with CBFA2T3 stretch occupies residues 298 to 571; that stretch reads LPNHMSSSVN…FMSSHIKSVH (274 aa). The segment at 332 to 365 is disordered; the sequence is IIDDDDDIISSSPDSAVSNTSLVPQADNSKSTTL. Residues 347–365 are compositionally biased toward polar residues; that stretch reads AVSNTSLVPQADNSKSTTL. Residues lysine 388, lysine 405, lysine 412, and lysine 447 each participate in a glycyl lysine isopeptide (Lys-Gly) (interchain with G-Cter in SUMO2) cross-link. Residues 451 to 461 are compositionally biased toward basic and acidic residues; sequence DGGEAKLDNEL. Residues 451-474 form a disordered region; that stretch reads DGGEAKLDNELPKTSGSEPPNKRM. The tract at residues 452–671 is interaction with CTNND1; the sequence is GGEAKLDNEL…EFEFIIPESY (220 aa). Glycyl lysine isopeptide (Lys-Gly) (interchain with G-Cter in SUMO2) cross-links involve residues lysine 463, lysine 472, and lysine 477. The Nuclear localization signal motif lies at 469–478; the sequence is PPNKRMKVKH. C2H2-type zinc fingers lie at residues 492–514, 520–542, and 548–571; these read YICI…FNIH, YQCR…EIHH, and YQCL…KSVH. Positions 512–637 are required for DNA-binding; that stretch reads NIHSWEKKYQ…TSTPPQNKST (126 aa). Glycyl lysine isopeptide (Lys-Gly) (interchain with G-Cter in SUMO2) cross-links involve residues lysine 537, lysine 568, lysine 580, lysine 609, and lysine 616.

In terms of assembly, interacts with NCOR1. Self-associates. Interacts with CTNND1, and this interaction inhibits binding to both methylated and non-methylated DNA. Interacts with CTNND2. Interacts with KPNA2/RCH1, which may mediate nuclear import of this protein. Interacts with CBFA2T3. Expressed in brain, heart, kidney, liver, lung, neuromuscular junctions, skeletal muscle, spleen and testis.

The protein localises to the nucleus. Transcriptional regulator with bimodal DNA-binding specificity. Binds to methylated CpG dinucleotides in the consensus sequence 5'-CGCG-3' and also binds to the non-methylated consensus sequence 5'-CTGCNA-3' also known as the consensus kaiso binding site (KBS). May recruit the N-CoR repressor complex to promote histone deacetylation and the formation of repressive chromatin structures in target gene promoters. Contributes to the repression of target genes of the Wnt signaling pathway. May also activate transcription of a subset of target genes by the recruitment of CTNND2. Represses expression of MMP7 in conjunction with transcriptional corepressors CBFA2T3, CBFA2T2 and RUNX1T1. The sequence is that of Transcriptional regulator Kaiso (Zbtb33) from Mus musculus (Mouse).